The sequence spans 90 residues: Secretoglobin family 1D member 1 (90 aa).

Residues 1–21 form the signal peptide; the sequence is MRLSVCLLLLTLALCCYRANA.

Heterodimer of a lipophilin A and a lipophilin C (mammaglobin B) monomer associated head to head. Expressed in lachrymal gland, thymus, kidney, testis, ovary and salivary gland.

It localises to the secreted. May bind androgens and other steroids, may also bind estramustine, a chemotherapeutic agent used for prostate cancer. May be under transcriptional regulation of steroid hormones. In Homo sapiens (Human), this protein is Secretoglobin family 1D member 1 (SCGB1D1).